The chain runs to 307 residues: Pantothenate kinase (307 aa).

ATP is bound at residue 90-97 (GSVAVGKS).

Belongs to the prokaryotic pantothenate kinase family.

Its subcellular location is the cytoplasm. It carries out the reaction (R)-pantothenate + ATP = (R)-4'-phosphopantothenate + ADP + H(+). It functions in the pathway cofactor biosynthesis; coenzyme A biosynthesis; CoA from (R)-pantothenate: step 1/5. The polypeptide is Pantothenate kinase (Limosilactobacillus reuteri subsp. reuteri (strain JCM 1112) (Lactobacillus reuteri)).